The following is a 51-amino-acid chain: Large ribosomal subunit protein eL39 (51 aa).

It belongs to the eukaryotic ribosomal protein eL39 family. As to quaternary structure, part of the 50S ribosomal subunit.

The chain is Large ribosomal subunit protein eL39 from Pyrococcus furiosus (strain ATCC 43587 / DSM 3638 / JCM 8422 / Vc1).